A 490-amino-acid chain; its full sequence is Aspartyl/glutamyl-tRNA(Asn/Gln) amidotransferase subunit B (490 aa).

This sequence belongs to the GatB/GatE family. GatB subfamily. Heterotrimer of A, B and C subunits.

It catalyses the reaction L-glutamyl-tRNA(Gln) + L-glutamine + ATP + H2O = L-glutaminyl-tRNA(Gln) + L-glutamate + ADP + phosphate + H(+). It carries out the reaction L-aspartyl-tRNA(Asn) + L-glutamine + ATP + H2O = L-asparaginyl-tRNA(Asn) + L-glutamate + ADP + phosphate + 2 H(+). Allows the formation of correctly charged Asn-tRNA(Asn) or Gln-tRNA(Gln) through the transamidation of misacylated Asp-tRNA(Asn) or Glu-tRNA(Gln) in organisms which lack either or both of asparaginyl-tRNA or glutaminyl-tRNA synthetases. The reaction takes place in the presence of glutamine and ATP through an activated phospho-Asp-tRNA(Asn) or phospho-Glu-tRNA(Gln). The protein is Aspartyl/glutamyl-tRNA(Asn/Gln) amidotransferase subunit B of Burkholderia pseudomallei (strain 1106a).